The sequence spans 336 residues: Cell division protein ZipA (336 aa).

The Periplasmic portion of the chain corresponds to 1–2 (ME). Residues 3 to 23 (LHILFFILAGLLIAVLIGFSL) form a helical membrane-spanning segment. Topologically, residues 24 to 336 (WSARREKSRI…SRQAYLARVS (313 aa)) are cytoplasmic.

It belongs to the ZipA family. In terms of assembly, interacts with FtsZ via their C-terminal domains.

Its subcellular location is the cell inner membrane. Functionally, essential cell division protein that stabilizes the FtsZ protofilaments by cross-linking them and that serves as a cytoplasmic membrane anchor for the Z ring. Also required for the recruitment to the septal ring of downstream cell division proteins. This Actinobacillus pleuropneumoniae serotype 5b (strain L20) protein is Cell division protein ZipA.